Here is a 188-residue protein sequence, read N- to C-terminus: UPF0301 protein ABO_0112 (188 aa).

This sequence belongs to the UPF0301 (AlgH) family.

The sequence is that of UPF0301 protein ABO_0112 from Alcanivorax borkumensis (strain ATCC 700651 / DSM 11573 / NCIMB 13689 / SK2).